A 100-amino-acid polypeptide reads, in one-letter code: Competence protein ComGE (100 aa).

Residues 15–35 (VILLEAVVALAIFASIATLLL) form a helical membrane-spanning segment.

As to quaternary structure, the transformation pili are flexible filaments, consisting mainly of the major pilin ComGC and smaller amounts of the minor pilins, including at least ComGD, ComGF and ComGG, and perhaps ComGE. Interacts with ComGD. Interacts with ComGF. Interacts with ComGG.

The protein resides in the cell membrane. The protein localises to the cell surface. Required for formation of the type IV-like pilus (T4P) that plays a role in transformation. Transformation pili are dynamically extended and retracted, perhaps thereby promoting DNA uptake and transformation. Involved in transformation. Required for DNA binding. The chain is Competence protein ComGE from Streptococcus pneumoniae (strain ATCC BAA-255 / R6).